Consider the following 216-residue polypeptide: Inorganic pyrophosphatase (216 aa).

Substrate is bound by residues Lys-39, Arg-53, and Tyr-65. Mg(2+) is bound by residues Asp-93, Asp-98, and Asp-131. Substrate is bound at residue Tyr-168.

It belongs to the PPase family. In terms of assembly, homohexamer. It depends on Mg(2+) as a cofactor.

The protein resides in the cytoplasm. The enzyme catalyses diphosphate + H2O = 2 phosphate + H(+). Catalyzes the hydrolysis of inorganic pyrophosphate (PPi) forming two phosphate ions. The chain is Inorganic pyrophosphatase from Chlamydia caviae (strain ATCC VR-813 / DSM 19441 / 03DC25 / GPIC) (Chlamydophila caviae).